The primary structure comprises 337 residues: Glyceraldehyde-3-phosphate dehydrogenase 2 (337 aa).

NADP(+) is bound by residues 11-12, D35, R80, and T122; that span reads RI. D-glyceraldehyde 3-phosphate is bound by residues 153 to 155, T184, R199, 212 to 213, and R235; these read SCT and TG. C154 acts as the Nucleophile in catalysis. N317 lines the NADP(+) pocket.

In terms of assembly, homotetramer.

Its subcellular location is the cytoplasm. The enzyme catalyses D-glyceraldehyde 3-phosphate + phosphate + NADP(+) = (2R)-3-phospho-glyceroyl phosphate + NADPH + H(+). It carries out the reaction D-glyceraldehyde 3-phosphate + phosphate + NAD(+) = (2R)-3-phospho-glyceroyl phosphate + NADH + H(+). Its pathway is carbohydrate biosynthesis; Calvin cycle. Its function is as follows. Gap2 has a major role in carbon fixation as a component of the Calvin cycle. Catalyzes the oxidative phosphorylation of glyceraldehyde 3-phosphate (G3P) to 1,3-bisphosphoglycerate (BPG) using the cofactor NADP. The first reaction step involves the formation of a hemiacetal intermediate between G3P and a cysteine residue, and this hemiacetal intermediate is then oxidized to a thioester, with concomitant reduction of NADP to NADPH. The reduced NADPH is then exchanged with the second NAD, and the thioester is attacked by a nucleophilic inorganic phosphate to produce BPG. This chain is Glyceraldehyde-3-phosphate dehydrogenase 2 (gap2), found in Nostoc sp. (strain PCC 7120 / SAG 25.82 / UTEX 2576).